The sequence spans 190 residues: Orotate phosphoribosyltransferase (190 aa).

114–122 is a 5-phospho-alpha-D-ribose 1-diphosphate binding site; the sequence is EDVVTTGGS. Orotate is bound by residues Thr118 and Arg146.

The protein belongs to the purine/pyrimidine phosphoribosyltransferase family. PyrE subfamily. In terms of assembly, homodimer. Mg(2+) is required as a cofactor.

It catalyses the reaction orotidine 5'-phosphate + diphosphate = orotate + 5-phospho-alpha-D-ribose 1-diphosphate. It participates in pyrimidine metabolism; UMP biosynthesis via de novo pathway; UMP from orotate: step 1/2. Functionally, catalyzes the transfer of a ribosyl phosphate group from 5-phosphoribose 1-diphosphate to orotate, leading to the formation of orotidine monophosphate (OMP). The sequence is that of Orotate phosphoribosyltransferase from Caldanaerobacter subterraneus subsp. tengcongensis (strain DSM 15242 / JCM 11007 / NBRC 100824 / MB4) (Thermoanaerobacter tengcongensis).